A 9439-amino-acid polypeptide reads, in one-letter code: Extracellular matrix-binding protein ebh (9439 aa).

30 consecutive FIVAR domains span residues 1815–1871 (ARRR…VNSA), 1901–1957 (AKEQ…INDA), 1985–2041 (AYDT…VRDA), 2071–2127 (AKKR…ITSE), 2155–2211 (AYNK…VTQA), 2241–2297 (AKNR…ISSE), 2325–2381 (AYNK…VEDA), 2411–2467 (AKEK…ITEN), 2488–2551 (DTTS…VNNA), 2581–2638 (ARNR…STEI), 2665–2720 (AKNQ…IRTN), 2748–2804 (AKTA…VSDE), 2832–2888 (AYNQ…VNNA), 2918–2974 (AKEQ…ISNA), 3002–3058 (AYNQ…VTAA), 3088–3144 (AKQQ…ITNE), 3172–3228 (AYNQ…VAQA), 3258–3314 (AKNQ…ISDE), 3335–3398 (DTTE…VNNA), 3428–3484 (ARLN…ITTE), 3512–3567 (AKTA…IKTN), 3595–3650 (IKRQ…VKES), 3678–3733 (AKNR…IRQN), 3802–3860 (SMTA…IDQK), 3928–3983 (AMTQ…LDPA), 4056–4114 (AMQA…VNQK), 4182–4240 (SMGT…VDNA), 4308–4365 (AMHT…INQK), 4433–4491 (VMEQ…IEQA), and 4559–4617 (SMQT…IDQT). Positions 2495–2507 (EVRKLSRRGDTNN) are enriched in basic and acidic residues. Residues 2495–2514 (EVRKLSRRGDTNNKKPSSVS) are disordered. The segment covering 2925-2938 (AVDQVPSTEGMTQQ) has biased composition (polar residues). The segment at 2925–2951 (AVDQVPSTEGMTQQTKDDYNSKQQAAQ) is disordered. Residues 4649–4674 (GYLNDPQKSGEESLVNGSNTRSEVEE) are disordered. FIVAR domains are found at residues 4685–4743 (AMKQ…IEQK), 4811–4869 (AMQA…IEQA), 4937–4995 (AMSN…IEQA), 5063–5115 (AMEA…VLDK), 5189–5246 (AMLG…INQL), 5314–5372 (LMGA…VTTA), 5440–5498 (AMGE…IDQA), 5566–5624 (AMKK…ITNA), 5692–5750 (AMKQ…IADT), 5818–5875 (DMST…LQDL), 5943–6000 (AMKA…IKQA), 6068–6126 (KMEE…INRT), 6194–6252 (AMQQ…IQAI), and 6320–6378 (EMGT…IADA). Over residues 5699-5712 (QVNQDDQISNSSPF) the composition is skewed to polar residues. The disordered stretch occupies residues 5699–5719 (QVNQDDQISNSSPFINEDSDK). Residues 6413 to 6434 (NNSQRQSEHDEINSAPSRTEVS) are disordered. 18 FIVAR domains span residues 6446–6504 (AMRQ…IEDA), 6572–6630 (AMKA…INRA), 6698–6755 (SMNQ…IDQA), 6823–6877 (TMKA…ANDE), 6949–7007 (AMKK…INTI), 7075–7133 (SMNT…VERA), 7201–7259 (DMKK…IENA), 7327–7384 (AMKH…IKQL), 7452–7510 (AMEN…IEHA), 7578–7636 (AMKA…INSI), 7704–7762 (AMET…VDIV), 7830–7888 (AMKS…VRQA), 7956–8010 (VMGK…TKQA), 8078–8137 (IMGE…IDTF), 8205–8264 (AMKS…IQGL), 8332–8391 (AMKD…VLGL), 8459–8518 (KMKL…IQHL), and 8587–8643 (AMQG…ANII). The chain crosses the membrane as a helical span at residues 9306 to 9324 (TVGVITLTGLLSSFWLVLA). 3 stretches are compositionally biased toward basic and acidic residues: residues 9363 to 9375 (DKEE…DKHS), 9386 to 9395 (EKQLSEEDIH), and 9404 to 9413 (QNSDNKDTKQ). Residues 9363-9439 (DKEEQIQNDD…VVKTKKRSKK (77 aa)) form a disordered region. Residues 9414–9439 (KKVTSKKKKTPQSTKKVVKTKKRSKK) are compositionally biased toward basic residues.

It is found in the cell membrane. This chain is Extracellular matrix-binding protein ebh (ebh), found in Staphylococcus epidermidis (strain ATCC 12228 / FDA PCI 1200).